The sequence spans 2328 residues: Reducing polyketide synthase Preu2 (2328 aa).

The Ketosynthase family 3 (KS3) domain occupies methionine 1–serine 259. Positions isoleucine 376–serine 696 are malonyl-CoA:ACP transacylase (MAT) domain. The segment at asparagine 766 to aspartate 899 is N-terminal hotdog fold. The tract at residues asparagine 766–threonine 1057 is dehydratase (DH) domain. Residues asparagine 766–glutamate 1059 enclose the PKS/mFAS DH domain. Histidine 798 functions as the Proton acceptor; for dehydratase activity in the catalytic mechanism. The tract at residues leucine 914–glutamate 1059 is C-terminal hotdog fold. The Proton donor; for dehydratase activity role is filled by aspartate 969. Residues aspartate 1198 to aspartate 1419 form a methyltransferase (MT) domain region. The interval cysteine 1932 to valine 2111 is ketoreductase (KR)domain. Residues serine 2231 to leucine 2309 enclose the Carrier domain. Serine 2269 carries the post-translational modification O-(pantetheine 4'-phosphoryl)serine.

It depends on pantetheine 4'-phosphate as a cofactor.

Functionally, reducing polyketide synthase; part of a gene cluster that mediates the biosynthesis of a yet unidentified natural product. In Preussia isomera (Coprophilous fungus), this protein is Reducing polyketide synthase Preu2.